Reading from the N-terminus, the 103-residue chain is Histone H4 (103 aa).

The segment covering 1 to 14 (MTGRGKGGKGLGKG) has biased composition (gly residues). A disordered region spans residues 1-20 (MTGRGKGGKGLGKGGAKRHR). 2 positions are modified to N6-acetyl-N6-methyllysine; alternate: Lys-6 and Lys-13. Residues 17-21 (KRHRK) mediate DNA binding.

It belongs to the histone H4 family. The nucleosome is a histone octamer containing two molecules each of H2A, H2B, H3 and H4 assembled in one H3-H4 heterotetramer and two H2A-H2B heterodimers. The octamer wraps approximately 147 bp of DNA.

It localises to the nucleus. Its subcellular location is the chromosome. Core component of nucleosome. Nucleosomes wrap and compact DNA into chromatin, limiting DNA accessibility to the cellular machineries which require DNA as a template. Histones thereby play a central role in transcription regulation, DNA repair, DNA replication and chromosomal stability. DNA accessibility is regulated via a complex set of post-translational modifications of histones, also called histone code, and nucleosome remodeling. The sequence is that of Histone H4 (His4) from Myrmica ruginodis (Red ant).